The primary structure comprises 304 residues: UDP-3-O-acyl-N-acetylglucosamine deacetylase (304 aa).

H78, H237, and D241 together coordinate Zn(2+). The active-site Proton donor is H264.

Belongs to the LpxC family. The cofactor is Zn(2+).

It catalyses the reaction a UDP-3-O-[(3R)-3-hydroxyacyl]-N-acetyl-alpha-D-glucosamine + H2O = a UDP-3-O-[(3R)-3-hydroxyacyl]-alpha-D-glucosamine + acetate. Its pathway is glycolipid biosynthesis; lipid IV(A) biosynthesis; lipid IV(A) from (3R)-3-hydroxytetradecanoyl-[acyl-carrier-protein] and UDP-N-acetyl-alpha-D-glucosamine: step 2/6. Catalyzes the hydrolysis of UDP-3-O-myristoyl-N-acetylglucosamine to form UDP-3-O-myristoylglucosamine and acetate, the committed step in lipid A biosynthesis. The sequence is that of UDP-3-O-acyl-N-acetylglucosamine deacetylase from Polynucleobacter necessarius subsp. necessarius (strain STIR1).